Here is a 122-residue protein sequence, read N- to C-terminus: S-adenosylmethionine decarboxylase proenzyme (122 aa).

Ser-63 acts as the Schiff-base intermediate with substrate; via pyruvic acid in catalysis. Position 63 is a pyruvic acid (Ser); by autocatalysis (Ser-63). His-68 functions as the Proton acceptor; for processing activity in the catalytic mechanism. The Proton donor; for catalytic activity role is filled by Cys-83.

It belongs to the prokaryotic AdoMetDC family. Type 1 subfamily. Heterotetramer of two alpha and two beta chains arranged as a dimer of alpha/beta heterodimers. Requires pyruvate as cofactor. Post-translationally, is synthesized initially as an inactive proenzyme. Formation of the active enzyme involves a self-maturation process in which the active site pyruvoyl group is generated from an internal serine residue via an autocatalytic post-translational modification. Two non-identical subunits are generated from the proenzyme in this reaction, and the pyruvate is formed at the N-terminus of the alpha chain, which is derived from the carboxyl end of the proenzyme. The post-translation cleavage follows an unusual pathway, termed non-hydrolytic serinolysis, in which the side chain hydroxyl group of the serine supplies its oxygen atom to form the C-terminus of the beta chain, while the remainder of the serine residue undergoes an oxidative deamination to produce ammonia and the pyruvoyl group blocking the N-terminus of the alpha chain.

The enzyme catalyses S-adenosyl-L-methionine + H(+) = S-adenosyl 3-(methylsulfanyl)propylamine + CO2. It participates in amine and polyamine biosynthesis; S-adenosylmethioninamine biosynthesis; S-adenosylmethioninamine from S-adenosyl-L-methionine: step 1/1. In terms of biological role, catalyzes the decarboxylation of S-adenosylmethionine to S-adenosylmethioninamine (dcAdoMet), the propylamine donor required for the synthesis of the polyamines spermine and spermidine from the diamine putrescine. The polypeptide is S-adenosylmethionine decarboxylase proenzyme (Methanococcus maripaludis (strain C7 / ATCC BAA-1331)).